The primary structure comprises 219 residues: Protein VERNALIZATION 2 (219 aa).

Positions 138-180 (REAKVMRYREKKKRRRYEKQIRYESRKAYAEMRPRVKGRFAKV) constitute a CCT domain.

Mainly expressed in leaves, and at low levels in the shoot apical meristem (SAM).

It is found in the nucleus. Its function is as follows. Involved in the regulation of vernalization; this process in essential for flowering in cv. Bd29-1 but seems do not occur in cv. Bd21. The sequence is that of Protein VERNALIZATION 2 from Brachypodium distachyon (Purple false brome).